A 581-amino-acid polypeptide reads, in one-letter code: Sulfate adenylyltransferase (581 aa).

The interval 1–176 (MANAPHGGVL…VQAIQAPTHF (176 aa)) is N-terminal. Residues 177-401 (DYVPLRYTPA…LRESYPPRPQ (225 aa)) form a catalytic region. Position 204 (Q204) interacts with sulfate. ATP-binding positions include 204–207 (QTRN) and 298–301 (GRDH). Residues T205, R206, and N207 contribute to the active site. R206 is a sulfate binding site. A302 contributes to the sulfate binding site. Residue M340 coordinates ATP. The segment at 402–581 (QGFTILLTGL…IMILESQNLV (180 aa)) is allosteric regulation domain; adenylyl-sulfate kinase-like. Residues 441–444 (EELR), 486–487 (TA), and R526 each bind 3'-phosphoadenylyl sulfate.

This sequence in the N-terminal section; belongs to the sulfate adenylyltransferase family. In the C-terminal section; belongs to the APS kinase family. In terms of assembly, homohexamer. Dimer of trimers.

It is found in the cytoplasm. The enzyme catalyses sulfate + ATP + H(+) = adenosine 5'-phosphosulfate + diphosphate. It participates in sulfur metabolism; hydrogen sulfide biosynthesis; sulfite from sulfate: step 1/3. With respect to regulation, allosterically inhibited by 3'-phosphoadenosine 5'-phosphosulfate (PAPS). In terms of biological role, catalyzes the first intracellular reaction of sulfate assimilation, forming adenosine-5'-phosphosulfate (APS) from inorganic sulfate and ATP. Plays an important role in sulfate activation as a component of the biosynthesis pathway of sulfur-containing amino acids. The polypeptide is Sulfate adenylyltransferase (Cryptococcus neoformans var. grubii serotype A (strain H99 / ATCC 208821 / CBS 10515 / FGSC 9487) (Filobasidiella neoformans var. grubii)).